The following is a 326-amino-acid chain: dTDP-4-dehydro-6-deoxy-D-allose reductase (326 aa).

NADP(+)-binding positions include Gly-15–Gly-21 and Met-129–Ser-132. The active-site Proton donor/acceptor is the Tyr-160. NADP(+) contacts are provided by residues Lys-164 and Pro-187 to Val-190.

Belongs to the NAD(P)-dependent epimerase/dehydratase family.

The catalysed reaction is dTDP-6-deoxy-alpha-D-allose + NAD(+) = dTDP-4-dehydro-6-deoxy-alpha-D-allose + NADH + H(+). It carries out the reaction dTDP-6-deoxy-alpha-D-allose + NADP(+) = dTDP-4-dehydro-6-deoxy-alpha-D-allose + NADPH + H(+). In terms of biological role, catalyzes the stereospecific reduction of the C-4 keto group of dTDP-4-dehydro-6-deoxy-D-allose, leading to dTDP-6-deoxy-D-allose, an intermediate in the biosynthesis of the mycinose moiety of the chalcomycin antibiotic. This chain is dTDP-4-dehydro-6-deoxy-D-allose reductase (chmD), found in Streptomyces bikiniensis.